The chain runs to 123 residues: Small ribosomal subunit protein uS13 (123 aa).

Residues 95–123 are disordered; sequence GLPVRGQKTKTNARTRKGPKRAISGKKNK.

This sequence belongs to the universal ribosomal protein uS13 family. As to quaternary structure, part of the 30S ribosomal subunit. Forms a loose heterodimer with protein S19. Forms two bridges to the 50S subunit in the 70S ribosome.

In terms of biological role, located at the top of the head of the 30S subunit, it contacts several helices of the 16S rRNA. In the 70S ribosome it contacts the 23S rRNA (bridge B1a) and protein L5 of the 50S subunit (bridge B1b), connecting the 2 subunits; these bridges are implicated in subunit movement. Contacts the tRNAs in the A and P-sites. The sequence is that of Small ribosomal subunit protein uS13 from Clostridium novyi (strain NT).